The chain runs to 287 residues: Putative syntaxin-4 (287 aa).

At 1 to 262 (MHQISGINAA…NRKWKIVTCI (262 aa)) the chain is on the cytoplasmic side. Residues 65–97 (KCRKLNDHVDKFIAQARGIRRRLADASEELVQY) are a coiled coil. The t-SNARE coiled-coil homology domain occupies 184 to 246 (FDDMKNRATD…EQAQQNVRQA (63 aa)). The helical; Anchor for type IV membrane protein transmembrane segment at 263–283 (ALIVLLLVVVYLLSHFLGAII) threads the bilayer. Topologically, residues 284-287 (PGWK) are extracellular.

Belongs to the syntaxin family.

Its subcellular location is the membrane. Functionally, potentially involved in docking of synaptic vesicles at presynaptic active zones. The polypeptide is Putative syntaxin-4 (syx-4) (Caenorhabditis elegans).